The chain runs to 297 residues: MEIKNLTTEQRNPATMHIDSMSTIDMVKTINKEDQKVAVAVGTQDDKIAQAIDEAAKRYSKGGRLIYIGAGTSGRLGVLDAAELVPTYGIKPERAIGLIAGGKGAMYVAVEGAEDSQDLAKRDLKDLKLNKNDIVLGLAASGRTPYVIGGLDYAKAIGALTISIACVKDSKIGHHADIAIEAVVGPEAITGSTRMKAGTAQKMILNMISTGVMIKQGKVFENVMIDVKPTNSKLIDRACRIIQTTTGVSTPEARNTLEKANNDVGLAIVMLKTNSDLNQAKNLLKAENGNVAEVLNK.

The region spanning Ala-55–Lys-218 is the SIS domain. Glu-83 (proton donor) is an active-site residue. Glu-114 is a catalytic residue.

Belongs to the GCKR-like family. MurNAc-6-P etherase subfamily. Homodimer.

It catalyses the reaction N-acetyl-D-muramate 6-phosphate + H2O = N-acetyl-D-glucosamine 6-phosphate + (R)-lactate. Its pathway is amino-sugar metabolism; N-acetylmuramate degradation. In terms of biological role, specifically catalyzes the cleavage of the D-lactyl ether substituent of MurNAc 6-phosphate, producing GlcNAc 6-phosphate and D-lactate. This is N-acetylmuramic acid 6-phosphate etherase from Lactobacillus gasseri (strain ATCC 33323 / DSM 20243 / BCRC 14619 / CIP 102991 / JCM 1131 / KCTC 3163 / NCIMB 11718 / NCTC 13722 / AM63).